The sequence spans 314 residues: Acetyl-coenzyme A carboxylase carboxyl transferase subunit beta (314 aa).

One can recognise a CoA carboxyltransferase N-terminal domain in the interval 44–311 (LMNKCPHCGT…VETWQASSPL (268 aa)). Residues Cys-48, Cys-51, Cys-67, and Cys-70 each coordinate Zn(2+). Residues 48-70 (CPHCGTIHYSKDLEKNLRVCKGC) form a C4-type zinc finger.

The protein belongs to the AccD/PCCB family. In terms of assembly, acetyl-CoA carboxylase is a heterohexamer composed of biotin carboxyl carrier protein (AccB), biotin carboxylase (AccC) and two subunits each of ACCase subunit alpha (AccA) and ACCase subunit beta (AccD). The cofactor is Zn(2+).

Its subcellular location is the cytoplasm. It carries out the reaction N(6)-carboxybiotinyl-L-lysyl-[protein] + acetyl-CoA = N(6)-biotinyl-L-lysyl-[protein] + malonyl-CoA. Its pathway is lipid metabolism; malonyl-CoA biosynthesis; malonyl-CoA from acetyl-CoA: step 1/1. In terms of biological role, component of the acetyl coenzyme A carboxylase (ACC) complex. Biotin carboxylase (BC) catalyzes the carboxylation of biotin on its carrier protein (BCCP) and then the CO(2) group is transferred by the transcarboxylase to acetyl-CoA to form malonyl-CoA. The chain is Acetyl-coenzyme A carboxylase carboxyl transferase subunit beta from Brevibacillus brevis (strain 47 / JCM 6285 / NBRC 100599).